The following is a 1061-amino-acid chain: Eukaryotic translation initiation factor 3 subunit A (1061 aa).

The span at 114-126 (QSSIEATTGSSSV) shows a compositional bias: polar residues. A disordered region spans residues 114–133 (QSSIEATTGSSSVEDLEASE). The PCI domain maps to 339-523 (LQKAATFVVL…GVLSFDVDVF (185 aa)). Coiled coils occupy residues 609 to 724 (EVIQ…KRLD) and 789 to 906 (RADL…AAAA). Basic and acidic residues predominate over residues 828 to 901 (REKREREEKE…EAMARRRAEK (74 aa)). The tract at residues 828–1061 (REKREREEKE…KYVPKFRREG (234 aa)) is disordered. Composition is skewed to pro residues over residues 950–962 (SGPP…PPPI) and 1000–1011 (APPPERSGPPPR).

This sequence belongs to the eIF-3 subunit A family. As to quaternary structure, component of the eukaryotic translation initiation factor 3 (eIF-3) complex.

Its subcellular location is the cytoplasm. Functionally, RNA-binding component of the eukaryotic translation initiation factor 3 (eIF-3) complex, which is involved in protein synthesis of a specialized repertoire of mRNAs and, together with other initiation factors, stimulates binding of mRNA and methionyl-tRNAi to the 40S ribosome. The eIF-3 complex specifically targets and initiates translation of a subset of mRNAs involved in cell proliferation. This chain is Eukaryotic translation initiation factor 3 subunit A, found in Chaetomium globosum (strain ATCC 6205 / CBS 148.51 / DSM 1962 / NBRC 6347 / NRRL 1970) (Soil fungus).